Consider the following 260-residue polypeptide: Neuraminyllactose-binding hemagglutinin (260 aa).

The N-terminal stretch at Met-1–Gly-27 is a signal peptide. Cys-28 carries the N-palmitoyl cysteine lipid modification. A lipid anchor (S-diacylglycerol cysteine) is attached at Cys-28. The segment at Lys-134–Lys-139 is N-acetyl-neuraminyl-alpha(2,3)-lactose binding motif.

Its subcellular location is the cell outer membrane. This Helicobacter pylori (Campylobacter pylori) protein is Neuraminyllactose-binding hemagglutinin (hpaA).